The primary structure comprises 628 residues: Protein ETHYLENE INSENSITIVE 3 (628 aa).

Positions 38–68 (EDDYTDDEIDVDELERRMWRDKMRLKRLKEQ) form a coiled coil. Basic and acidic residues predominate over residues 66–79 (KEQDKGKEGVDAAK). The interval 66 to 92 (KEQDKGKEGVDAAKQRQSQEQARRKKM) is disordered. Positions 174–306 (TPHTLQELQD…SLARELYPES (133 aa)) are DNA-binding domain.

Belongs to the EIN3 family. In terms of assembly, acts as a homodimer to bind the primary ethylene response element. Interacts with TAF12B. Interacts with KIN10. Binds to ENAP1 in the presence of ethylene; this reaction facilitates its association with histone. Phosphorylated by KIN10.

It localises to the nucleus. Its activity is regulated as follows. Activated by phosphorylation by MPK3 and MPK6. Down-regulated by KIN10 that controls its protein stability under a phosphorylation-dependent manner. Satnilitzed during hypoxia (e.g. submergences) via a ceramides-triggered and CTR1-dependent manner. Its function is as follows. Transcription factor acting as a positive regulator in the ethylene response pathway, by promoting histone acetylation in an ENAP1-dependent manner, thus accelerating the expression of ethylene-responsive genes. Binds DNA. Is required for ethylene responsiveness in adult plant tissues. Binds a primary ethylene response element present in the ETHYLENE-RESPONSE-FACTOR1 promoter with consequence to activate the transcription of this gene. The polypeptide is Protein ETHYLENE INSENSITIVE 3 (Arabidopsis thaliana (Mouse-ear cress)).